A 191-amino-acid polypeptide reads, in one-letter code: Fe/S biogenesis protein NfuA (191 aa).

Positions 149 and 152 each coordinate [4Fe-4S] cluster.

The protein belongs to the NfuA family. As to quaternary structure, homodimer. Requires [4Fe-4S] cluster as cofactor.

Functionally, involved in iron-sulfur cluster biogenesis. Binds a 4Fe-4S cluster, can transfer this cluster to apoproteins, and thereby intervenes in the maturation of Fe/S proteins. Could also act as a scaffold/chaperone for damaged Fe/S proteins. This is Fe/S biogenesis protein NfuA from Salmonella arizonae (strain ATCC BAA-731 / CDC346-86 / RSK2980).